A 279-amino-acid polypeptide reads, in one-letter code: Biotin synthase (279 aa).

A Radical SAM core domain is found at 2–228; that stretch reads KTIMLCAICS…ETRVMIAGGR (227 aa). Cys-17, Cys-21, and Cys-24 together coordinate [4Fe-4S] cluster. Residues Cys-61, Cys-96, Cys-154, and Arg-221 each contribute to the [2Fe-2S] cluster site.

The protein belongs to the radical SAM superfamily. Biotin synthase family. In terms of assembly, homodimer. Requires [4Fe-4S] cluster as cofactor. The cofactor is [2Fe-2S] cluster.

It carries out the reaction (4R,5S)-dethiobiotin + (sulfur carrier)-SH + 2 reduced [2Fe-2S]-[ferredoxin] + 2 S-adenosyl-L-methionine = (sulfur carrier)-H + biotin + 2 5'-deoxyadenosine + 2 L-methionine + 2 oxidized [2Fe-2S]-[ferredoxin]. Its pathway is cofactor biosynthesis; biotin biosynthesis; biotin from 7,8-diaminononanoate: step 2/2. Its function is as follows. Catalyzes the conversion of dethiobiotin (DTB) to biotin by the insertion of a sulfur atom into dethiobiotin via a radical-based mechanism. This Campylobacter concisus (strain 13826) protein is Biotin synthase.